Reading from the N-terminus, the 286-residue chain is Aquaporin PIP1-1 (286 aa).

Met-1 bears the N-acetylmethionine mark. Residues 1-34 (MEGKEEDVRVGANKFPERQPIGTSAQSDKDYKEP) form a disordered region. Topologically, residues 1–54 (MEGKEEDVRVGANKFPERQPIGTSAQSDKDYKEPPPAPFFEPGELSSWSFWRAG) are cytoplasmic. The chain crosses the membrane as a helical span at residues 55-75 (IAEFIATFLFLYITVLTVMGV). The Extracellular portion of the chain corresponds to 76–91 (KRSPNMCASVGIQGIA). Residues 92 to 112 (WAFGGMIFALVYCTAGISGGH) traverse the membrane as a helical segment. Over 113–132 (INPAVTFGLFLARKLSLTRA) the chain is Cytoplasmic. An NPA 1 motif is present at residues 114-116 (NPA). Residues 133-153 (LYYIVMQCLGAICGAGVVKGF) form a helical membrane-spanning segment. Residues 154-174 (QPKQYQALGGGANTVAHGYTK) are Extracellular-facing. Residues 175-195 (GSGLGAEIIGTFVLVYTVFSA) traverse the membrane as a helical segment. The Cytoplasmic segment spans residues 196 to 208 (TDAKRNARDSHVP). Residues 209–229 (ILAPLPIGFAVFLVHLATIPI) form a helical membrane-spanning segment. At 230–256 (TGTGINPARSLGAAIIYNKDHSWDDHW) the chain is on the extracellular side. The NPA 2 signature appears at 235–237 (NPA). Residues 257-277 (VFWVGPFIGAALAALYHVVVI) form a helical membrane-spanning segment. At 278 to 286 (RAIPFKSRS) the chain is on the cytoplasmic side. Ser-284 carries the phosphoserine modification.

Belongs to the MIP/aquaporin (TC 1.A.8) family. PIP (TC 1.A.8.11) subfamily. In terms of tissue distribution, widely expressed. Expressed in roots, above ground and in flower buds.

It is found in the cell membrane. Its function is as follows. Water channel required to facilitate the transport of water across cell membrane. Its function is impaired by Hg(2+). The protein is Aquaporin PIP1-1 (PIP1-1) of Arabidopsis thaliana (Mouse-ear cress).